Here is a 439-residue protein sequence, read N- to C-terminus: Trigger factor (439 aa).

A PPIase FKBP-type domain is found at 162-247 (GDTVTIDYVG…IHEVKAKQLP (86 aa)).

The protein belongs to the FKBP-type PPIase family. Tig subfamily.

The protein resides in the cytoplasm. It catalyses the reaction [protein]-peptidylproline (omega=180) = [protein]-peptidylproline (omega=0). Its function is as follows. Involved in protein export. Acts as a chaperone by maintaining the newly synthesized protein in an open conformation. Functions as a peptidyl-prolyl cis-trans isomerase. The protein is Trigger factor of Lactobacillus delbrueckii subsp. bulgaricus (strain ATCC 11842 / DSM 20081 / BCRC 10696 / JCM 1002 / NBRC 13953 / NCIMB 11778 / NCTC 12712 / WDCM 00102 / Lb 14).